The chain runs to 255 residues: Protein patched homolog 2 (255 aa).

Topologically, residues 1–197 (SLLQGGSAYL…LNDIMKSFSD (197 aa)) are extracellular. 2 N-linked (GlcNAc...) asparagine glycosylation sites follow: Asn-147 and Asn-175. Residues 198–218 (VSVIRVAGGYLLMLAYACVTM) form a helical membrane-spanning segment. In terms of domain architecture, SSD spans 199 to 255 (SVIRVAGGYLLMLAYACVTMLRWDCTKSQGAVGLAGVLLVALSVASGLGLCSLLGIS). Over 219–227 (LRWDCTKSQ) the chain is Cytoplasmic. Residues 228–248 (GAVGLAGVLLVALSVASGLGL) traverse the membrane as a helical segment. The Extracellular segment spans residues 249–255 (CSLLGIS).

The protein belongs to the patched family. In the eye, detected in neural retina, iris, retinal pigment epithelium, but not in lens.

It is found in the membrane. In terms of biological role, may act as a receptor for sonic hedgehog (SHH). The polypeptide is Protein patched homolog 2 (PTC2) (Cynops pyrrhogaster (Japanese fire-bellied newt)).